Consider the following 181-residue polypeptide: ATP-dependent protease subunit HslV (181 aa).

Residue Thr9 is part of the active site. Na(+) contacts are provided by Ala166, Cys169, and Thr172.

This sequence belongs to the peptidase T1B family. HslV subfamily. A double ring-shaped homohexamer of HslV is capped on each side by a ring-shaped HslU homohexamer. The assembly of the HslU/HslV complex is dependent on binding of ATP.

The protein resides in the cytoplasm. The enzyme catalyses ATP-dependent cleavage of peptide bonds with broad specificity.. With respect to regulation, allosterically activated by HslU binding. Its function is as follows. Protease subunit of a proteasome-like degradation complex believed to be a general protein degrading machinery. The sequence is that of ATP-dependent protease subunit HslV from Staphylococcus aureus (strain bovine RF122 / ET3-1).